Reading from the N-terminus, the 161-residue chain is Allophycocyanin subunit alpha-B (161 aa).

Residue Asn-71 is modified to N4-methylasparagine. Cys-81 serves as a coordination point for (2R,3E)-phycocyanobilin.

This sequence belongs to the phycobiliprotein family. As to quaternary structure, heterohexamer of two alpha chains, one alpha-B chain and three beta chains. Post-translationally, contains one covalently linked bilin chromophore.

The protein resides in the cellular thylakoid membrane. Its function is as follows. Light-harvesting photosynthetic bile pigment-protein from the phycobiliprotein complex. Allophycocyanin has a maximum absorption at approximately 654 nanometers. The protein is Allophycocyanin subunit alpha-B (apcD) of Synechocystis sp. (strain ATCC 27184 / PCC 6803 / Kazusa).